A 170-amino-acid polypeptide reads, in one-letter code: MKQTERRILLGRVVGAFGVKGELKLESWTEPRSAIFRYQPWIVRAPSGQESVINGVRGRDQGKNLIAVFPGVADRDTVEAMHGTEIYVARSALPPPKPDEYYWVDLEELQVETVEGVKLGTVSHLFSTGSNDVVVVRGDRERMIPFVFPDFVKSVDFEANLIVVDWDPDF.

One can recognise a PRC barrel domain in the interval 98-170; the sequence is PDEYYWVDLE…LIVVDWDPDF (73 aa).

This sequence belongs to the RimM family. As to quaternary structure, binds ribosomal protein uS19.

The protein resides in the cytoplasm. In terms of biological role, an accessory protein needed during the final step in the assembly of 30S ribosomal subunit, possibly for assembly of the head region. Essential for efficient processing of 16S rRNA. May be needed both before and after RbfA during the maturation of 16S rRNA. It has affinity for free ribosomal 30S subunits but not for 70S ribosomes. This Xanthomonas oryzae pv. oryzae (strain MAFF 311018) protein is Ribosome maturation factor RimM.